The chain runs to 182 residues: Large ribosomal subunit protein uL6 (182 aa).

The protein belongs to the universal ribosomal protein uL6 family. In terms of assembly, part of the 50S ribosomal subunit.

Functionally, this protein binds to the 23S rRNA, and is important in its secondary structure. It is located near the subunit interface in the base of the L7/L12 stalk, and near the tRNA binding site of the peptidyltransferase center. The chain is Large ribosomal subunit protein uL6 from Methanococcus maripaludis (strain C6 / ATCC BAA-1332).